Consider the following 102-residue polypeptide: Small ribosomal subunit protein uS10 (102 aa).

Belongs to the universal ribosomal protein uS10 family. Part of the 30S ribosomal subunit.

Its function is as follows. Involved in the binding of tRNA to the ribosomes. This is Small ribosomal subunit protein uS10 from Malacoplasma penetrans (strain HF-2) (Mycoplasma penetrans).